The following is a 224-amino-acid chain: Synaptonemal complex protein 3 (224 aa).

Coiled coils occupy residues 63-97 (RVKC…WEER) and 137-171 (HDSM…QSST).

As to quaternary structure, interacts with gras-1. Interacts with brc-1 and brd-1.

Its subcellular location is the chromosome. Functionally, plays a role in early meiotic events; during prophase I contributes to synaptonemal complex (SC) assembly, synapsis and chiasmata formation and stabilization of homologous chromosomes pairing. Required for restricting SC assembly to bridge paired chromosome axes. Required for the timely progression of meiotic crossover recombination. Required for the synapsis checkpoint. This chain is Synaptonemal complex protein 3, found in Caenorhabditis elegans.